The sequence spans 433 residues: Alpha-(1-&gt;3)-arabinofuranosyltransferase (433 aa).

The next 10 membrane-spanning stretches (helical) occupy residues 118 to 138 (LFIS…LRMF), 140 to 160 (FTLT…TETV), 164 to 184 (LVFT…LRWL), 197 to 217 (LAIG…LLPL), 224 to 244 (ALVA…PLVS), 280 to 300 (WLIL…LWLL), 310 to 330 (LFWF…VMSL), 333 to 353 (GYYS…NSVI), 356 to 376 (WPAW…LFNW), and 385 to 405 (YLKI…VLYF).

Belongs to the glycosyltransferase 87 family.

It is found in the cell membrane. The catalysed reaction is Adds an alpha-D-arabinofuranosyl group from trans,octacis-decaprenylphospho-beta-D-arabinofuranose at the 3-O-position of an alpha-(1-&gt;5)-arabinofuranan chain attached to a beta-(1-&gt;5)-galactofuranan chain.. The protein operates within cell wall biogenesis; cell wall polysaccharide biosynthesis. Functionally, involved in the biosynthesis of the arabinogalactan (AG) region of the mycolylarabinogalactan-peptidoglycan (mAGP) complex, an essential component of the mycobacterial cell wall. Catalyzes the addition of an arabinofuranosyl (Araf) residue from the sugar donor beta-D-arabinofuranosyl-1-monophosphoryldecaprenol (DPA) on the C-3 of an alpha-(1-&gt;5)-linked Araf from the arabinan backbone of AG. The protein is Alpha-(1-&gt;3)-arabinofuranosyltransferase (aftC) of Mycobacterium tuberculosis (strain CDC 1551 / Oshkosh).